The chain runs to 221 residues: Keratin-associated protein 10-3 (221 aa).

Tandem repeats lie at residues 26-30 (CCEPP), 31-35 (CCATS), 36-40 (CCAPA), 57-61 (CCQAA), 79-83 (CCQQS), 89-93 (CCTSS), 99-103 (CCVPV), 104-108 (CCKPV), 109-113 (CCVPV), 114-118 (CCKPV), 119-123 (CCKPI), 124-128 (CCVPV), 136-140 (CCQQS), 146-150 (CCTTS), 151-155 (CCRPS), 177-181 (CCAPA), 188-192 (CCRPA), and 210-214 (CCGLS). Positions 26–214 (CCEPPCCATS…RLSSACCGLS (189 aa)) are 18 X 5 AA repeats of C-C-X(3).

It belongs to the KRTAP type 10 family. In terms of assembly, interacts with hair keratins. Restricted to a narrow region of the hair fiber cuticle, lying approximately 20 cell layers above the apex of the dermal papilla of the hair root; not detected in any other tissues.

In the hair cortex, hair keratin intermediate filaments are embedded in an interfilamentous matrix, consisting of hair keratin-associated proteins (KRTAP), which are essential for the formation of a rigid and resistant hair shaft through their extensive disulfide bond cross-linking with abundant cysteine residues of hair keratins. The matrix proteins include the high-sulfur and high-glycine-tyrosine keratins. The polypeptide is Keratin-associated protein 10-3 (KRTAP10-3) (Homo sapiens (Human)).